Here is a 1191-residue protein sequence, read N- to C-terminus: MASQVLVYPPYVYQTQSSAFCSVKKLKVEPSGCVFQERACPQIHVNGRHFGNPLPSTKGSAFQTKIPFSKPRGHSFSLQAGAIVVKDTAGATKVIAAQAQQAGVEAPRAVVWRNRLHFLGGPQRCGLKRKSEELDNHSGAMQIVDELSILPAMLQTNMGNPVTVVTATTGSKQNCTSGEGDYQLVQHEVLCSVKNTYEVLDFLGRGTFGQVVKCWKRGTNEIVAIKILKNHPSYARQGQIEVSILARLSTENADEYNFVRAYECFQHRNHTCLVFEMLEQNLYDFLKQNKFSPLPLKVIRPVLQQVATALKKLKSLGLIHADLKPENIMLVDPVRQPYRVKVIDFGSASHVSKTVCSTYLQSRYYRAPEIILGLPFCEAIDMWSLGCVIAELFLGWPLYPGALEYDQIRYISQTQGLPGEQLLNVGTKSTRFFCRETDMSHSGWRLKTLEEHEAETGMKSKEARKYIFNSLDDIVHVNTVMDLEGSDLLAEKADRREFVSLLKKMLLIDADLRITPIETLNHPFVSMKHLLDFPHSSHVKSCFHIMDICKSPSSCETNNHSKMSLLRPVASNGTAALAANFTKVGTLRSQALTTSAHSVVHHGIPLQAGTAQFGCGDAFHQTLIICPPAIQGIPAAHGKPTSYSIRVDNTVPLVTQAPAVQPLQIRPGVLSQTWSGRTQQMLIPAWQQVTPMAPAAATLTSEGMAGSQRLGDWGKMIPHSNHYNSVMPPPLLTNQITLSAPQPISVGIAHVVWPQPATTKKNKLCQNRSNSLQNTNVPHSAFISPKIISGKEVEEVSCVETQDNHTSEGEARTCHEASVRQDSSVSDKQRQTIIIADSPSPAVSVITISSDTDDEETSPRPSLRECKGSLDCEACQSTLNIDRMCSLSSPDSTLSTSSSGQSSPSPCKRPNSMSDDEQESGCETVDGSPTSDSSGHDSPFAESSFVEDTPQNPELGTCAGTEAKPALSTAVEPPVGTERGLNVDAHMANTDSTCQPLTKGQPAPGKLNQPSASAARQQKPTSAFQQQHLNLSQVQHFGTGHQEWNGNFGHRRQQAYIPTSVTSNPFTLSHGSPNHTAVHAHLAGSAHLGGQPTLLPYPPSTALSSAAPVAHLLASPCTSRPMLQHPTYNISHPSGIVHQVPVGINPRLLPSPTIHQTQYKPIFPPHSYIAASPAYTGFPLSPTKLSQYPYM.

Residue lysine 27 forms a Glycyl lysine isopeptide (Lys-Gly) (interchain with G-Cter in SUMO2) linkage. The Protein kinase domain maps to 197–525; sequence YEVLDFLGRG…PIETLNHPFV (329 aa). ATP contacts are provided by residues 203 to 211 and lysine 226; that span reads LGRGTFGQV. Aspartate 322 (proton acceptor) is an active-site residue. Tyrosine 359 is modified (phosphotyrosine). An interaction with AR region spans residues 766-920; sequence QNRSNSLQNT…NSMSDDEQES (155 aa). Residues 774-867 form an interaction with FAS region; the sequence is NTNVPHSAFI…SPRPSLRECK (94 aa). The interval 801–828 is disordered; that stretch reads TQDNHTSEGEARTCHEASVRQDSSVSDK. Residues 802-828 show a composition bias toward basic and acidic residues; the sequence is QDNHTSEGEARTCHEASVRQDSSVSDK. Positions 846–856 are interaction with UBL1; sequence ITISSDTDDEE. The span at 888-905 shows a compositional bias: low complexity; it reads SSPDSTLSTSSSGQSSPS. Disordered stretches follow at residues 888–960 and 993–1022; these read SSPD…TCAG and TCQP…KPTS. Residues 1008 to 1022 show a composition bias toward polar residues; sequence NQPSASAARQQKPTS.

The protein belongs to the protein kinase superfamily. CMGC Ser/Thr protein kinase family. HIPK subfamily. In terms of assembly, interacts with Nkx1-2. Interacts with FAS and DAXX. Probably part of a complex consisting of HIPK3, FAS and FADD. Interacts with UBL1/SUMO-1. Interacts with and stabilizes ligand-bound androgen receptor (AR). Post-translationally, autophosphorylated. Autophosphorylation is not required for catalytic activity. May be sumoylated.

It localises to the nucleus. The enzyme catalyses L-seryl-[protein] + ATP = O-phospho-L-seryl-[protein] + ADP + H(+). The catalysed reaction is L-threonyl-[protein] + ATP = O-phospho-L-threonyl-[protein] + ADP + H(+). Seems to negatively regulate apoptosis by promoting FADD phosphorylation. Enhances androgen receptor-mediated transcription. May act as a transcriptional corepressor for NK homeodomain transcription factors. The sequence is that of Homeodomain-interacting protein kinase 3 (Hipk3) from Rattus norvegicus (Rat).